A 507-amino-acid chain; its full sequence is ATP synthase subunit alpha, chloroplastic (507 aa).

Position 170 to 177 (170 to 177 (GDRQTGKT)) interacts with ATP.

The protein belongs to the ATPase alpha/beta chains family. F-type ATPases have 2 components, CF(1) - the catalytic core - and CF(0) - the membrane proton channel. CF(1) has five subunits: alpha(3), beta(3), gamma(1), delta(1), epsilon(1). CF(0) has four main subunits: a, b, b' and c.

The protein resides in the plastid. Its subcellular location is the chloroplast thylakoid membrane. It catalyses the reaction ATP + H2O + 4 H(+)(in) = ADP + phosphate + 5 H(+)(out). Functionally, produces ATP from ADP in the presence of a proton gradient across the membrane. The alpha chain is a regulatory subunit. This Oryza nivara (Indian wild rice) protein is ATP synthase subunit alpha, chloroplastic.